The sequence spans 97 residues: HssA/B-like protein 48 (97 aa).

Disordered stretches follow at residues 1–20 (MTLF…SKSS) and 78–97 (GSGY…CCGI).

It belongs to the hssA/B family.

This is HssA/B-like protein 48 (hssl48) from Dictyostelium discoideum (Social amoeba).